A 280-amino-acid chain; its full sequence is Dual adapter for phosphotyrosine and 3-phosphotyrosine and 3-phosphoinositide (280 aa).

The disordered stretch occupies residues 1 to 20 (MGRAELLEGKMSTQDPSDLW). Residues 35–129 (WYHGNLTRHA…GTLMVLKHPY (95 aa)) enclose the SH2 domain. Residue Y139 is modified to Phosphotyrosine. At S141 the chain carries Phosphoserine. The region spanning 164-259 (LGTKEGYLTK…WIKILRWKLS (96 aa)) is the PH domain.

In terms of assembly, interacts with PtdIns(3,4,5)P3 and PLCG2. In vitro, interacts with PtdIns(3,4)P2. Post-translationally, phosphorylated on tyrosine residues. Highly expressed in placenta and lung, followed by brain, heart, kidney, liver, pancreas and skeletal muscle. Expressed by B-lymphocytes, but not T-lymphocytes or nonhematopoietic cells.

The protein localises to the cytoplasm. Its subcellular location is the membrane. Its function is as follows. May act as a B-cell-associated adapter that regulates B-cell antigen receptor (BCR)-signaling downstream of PI3K. The polypeptide is Dual adapter for phosphotyrosine and 3-phosphotyrosine and 3-phosphoinositide (DAPP1) (Homo sapiens (Human)).